We begin with the raw amino-acid sequence, 297 residues long: L-threonate dehydrogenase (297 aa).

Residues 3–31 (RNIG…VHAC) and threonine 97 contribute to the NAD(+) site. Lysine 173 is a catalytic residue. An NAD(+)-binding site is contributed by lysine 241.

This sequence belongs to the HIBADH-related family. L-threonate dehydrogenase subfamily.

The catalysed reaction is L-threonate + NAD(+) = 2-dehydro-L-erythronate + NADH + H(+). Functionally, catalyzes oxidation of L-threonate to 2-oxo-tetronate. Can use either NAD(+) or NADP(+) as cosubstrate, with a preference for NAD(+). This Cupriavidus necator (strain ATCC 17699 / DSM 428 / KCTC 22496 / NCIMB 10442 / H16 / Stanier 337) (Ralstonia eutropha) protein is L-threonate dehydrogenase.